The following is a 460-amino-acid chain: Jacalin-related lectin 36 (460 aa).

Residues 1–131 (MAAATMSWDD…LNSIDVHFAP (131 aa)) enclose the Jacalin-type lectin 1 domain. An N-acetylalanine modification is found at Ala2. 3 disordered regions span residues 34 to 57 (YDGD…VSLS), 133 to 162 (PSSS…WDDG), and 291 to 334 (SGRG…PHEG). Residues 133 to 143 (PSSSSSSSSLS) are compositionally biased toward low complexity. The 145-residue stretch at 145–289 (ANKVDAQGGK…LNALGAYFAP (145 aa)) folds into the Jacalin-type lectin 2 domain. Positions 292 to 309 (GRGTPSATQPPGSAQPTG) are enriched in polar residues. A Jacalin-type lectin 3 domain is found at 313–457 (AKKLEAKGGN…IHQVGVHVKP (145 aa)).

This sequence belongs to the jacalin lectin family.

The polypeptide is Jacalin-related lectin 36 (JAL36) (Arabidopsis thaliana (Mouse-ear cress)).